The primary structure comprises 52 residues: Sperm protamine P1 (52 aa).

The segment at 1-27 (MARYSCCRSHSRSRSRRRRQRCRRRRR) is disordered. Residues 9–27 (SHSRSRSRRRRQRCRRRRR) show a composition bias toward basic residues.

Belongs to the protamine P1 family. Testis.

The protein resides in the nucleus. The protein localises to the chromosome. In terms of biological role, protamines substitute for histones in the chromatin of sperm during the haploid phase of spermatogenesis. They compact sperm DNA into a highly condensed, stable and inactive complex. This Rhinolophus ferrumequinum (Greater horseshoe bat) protein is Sperm protamine P1 (PRM1).